A 273-amino-acid chain; its full sequence is 3-methyl-2-oxobutanoate hydroxymethyltransferase (273 aa).

Mg(2+) is bound by residues Asp-53 and Asp-92. 3-methyl-2-oxobutanoate contacts are provided by residues 53–54 (DS), Asp-92, and Lys-122. Glu-124 contributes to the Mg(2+) binding site. Glu-191 (proton acceptor) is an active-site residue.

Belongs to the PanB family. Homodecamer; pentamer of dimers. Requires Mg(2+) as cofactor.

The protein localises to the cytoplasm. It catalyses the reaction 3-methyl-2-oxobutanoate + (6R)-5,10-methylene-5,6,7,8-tetrahydrofolate + H2O = 2-dehydropantoate + (6S)-5,6,7,8-tetrahydrofolate. It participates in cofactor biosynthesis; (R)-pantothenate biosynthesis; (R)-pantoate from 3-methyl-2-oxobutanoate: step 1/2. Its function is as follows. Catalyzes the reversible reaction in which hydroxymethyl group from 5,10-methylenetetrahydrofolate is transferred onto alpha-ketoisovalerate to form ketopantoate. The polypeptide is 3-methyl-2-oxobutanoate hydroxymethyltransferase (Bacteroides thetaiotaomicron (strain ATCC 29148 / DSM 2079 / JCM 5827 / CCUG 10774 / NCTC 10582 / VPI-5482 / E50)).